A 370-amino-acid polypeptide reads, in one-letter code: N-acyl-L-amino acid amidohydrolase (370 aa).

It belongs to the peptidase M20 family. As to quaternary structure, homotetramer. Co(2+) serves as cofactor.

It catalyses the reaction an N-acyl-L-amino acid + H2O = an L-alpha-amino acid + a carboxylate. The enzyme catalyses an N-acetyl-L-cysteine-S-conjugate + H2O = an S-substituted L-cysteine + acetate. Its function is as follows. Hydrolyzes most efficiently N-acetyl derivatives of aromatic amino acids but is also active on other amino acids. L-stereospecific. This Geobacillus stearothermophilus (Bacillus stearothermophilus) protein is N-acyl-L-amino acid amidohydrolase (amaA).